Consider the following 61-residue polypeptide: Peroxidase 1 (61 aa).

The disordered stretch occupies residues 1–32 (DNTAKEKDSPANLSLRTCAAGDNAEQPLDPSR). Residue asparagine 12 is glycosylated (N-linked (GlcNAc...) asparagine). Positions 29, 31, and 36 each coordinate Ca(2+).

Belongs to the peroxidase family. Classical plant (class III) peroxidase subfamily. Requires Ca(2+) as cofactor. It depends on heme b as a cofactor.

The protein localises to the secreted. It catalyses the reaction 2 a phenolic donor + H2O2 = 2 a phenolic radical donor + 2 H2O. In terms of biological role, removal of H(2)O(2), oxidation of toxic reductants, biosynthesis and degradation of lignin, suberization, auxin catabolism, response to environmental stresses such as wounding, pathogen attack and oxidative stress. These functions might be dependent on each isozyme/isoform in each plant tissue. The protein is Peroxidase 1 of Vitis rotundifolia (Muscadine grape).